We begin with the raw amino-acid sequence, 780 residues long: cGMP-dependent protein kinase egl-4 (780 aa).

Disordered regions lie at residues 1-55 (MSSG…QVQV) and 119-143 (EQKA…DQLG). Residues 9–35 (SGGGGGGGGASGGAGGGAPGGGGGGIR) are compositionally biased toward gly residues. A compositionally biased stretch (polar residues) spans 46-55 (DQPNGNQVQV). Residues 61-127 (EAHELQKLIP…LEQKAQSAAS (67 aa)) are a coiled coil. 3',5'-cyclic GMP-binding positions include 265–268 (GELA), 275–276 (RT), arginine 380, 389–392 (GERA), 399–400 (RT), and tyrosine 434. The Protein kinase domain occupies 469–729 (VKRLATLGVG…VNDIRKHRWF (261 aa)). Residues 475 to 483 (LGVGGFGRV) and lysine 499 contribute to the ATP site. The Nuclear localization signal signature appears at 492-504 (KAKTFALKALKKK). Catalysis depends on aspartate 593, which acts as the Proton acceptor. Residues 730 to 780 (MGFDWEGLRSRTLKPPILPKVSNPADVTNFDNYPPDNDVPPDEFSGWDEGF) form the AGC-kinase C-terminal domain. Positions 757–780 (TNFDNYPPDNDVPPDEFSGWDEGF) are disordered.

Belongs to the protein kinase superfamily. AGC Ser/Thr protein kinase family. cGMP subfamily. In terms of assembly, when phosphorylated, interacts with saeg-2. May interact with saeg-1. Mg(2+) is required as a cofactor. In terms of processing, autophosphorylated. Expressed in AWC sensory neurons (at protein level). Mainly expressed in head neurons, hypodermis, intestine and body wall muscles. L2 and L3 larvae show extensive expression, lower levels are observed in L4 larvae, later embryos and adults. Isoform c is expressed in a subset of neurons in the head, nerve ring, and ventral nerve cord including some motor neurons, also in several neurons in the tail, the pharyngeal marginal cells, body muscle, intestine, vulval muscles, and spermatheca.

The protein resides in the cytoplasm. The protein localises to the nucleus. The enzyme catalyses L-seryl-[protein] + ATP = O-phospho-L-seryl-[protein] + ADP + H(+). The catalysed reaction is L-threonyl-[protein] + ATP = O-phospho-L-threonyl-[protein] + ADP + H(+). With respect to regulation, binding of cGMP results in enzyme activation. Promotes chemoreceptor gene expression in response to increased cGMP levels by antagonizing the gene repression functions of the class II HDAC hda-4 and the mef-2 transcription factor. Regulates gene expression via recruitment of a histone deacetylase complex containing hda-2, saeg-1 and saeg-2. Represses body size and lifespan through the dbl-1 and insulin pathways, respectively. May also signal through daf-3 and/or daf-5. Role in egg-laying, dauer formation and motility. Regulates behavioral responses to various chemosensory stimuli in sensory neurons. Required for the initiation of long term adaptation to prolonged odor exposure which results in a decrease in odor seeking behavior. May regulate this process by phosphorylating tax-2, a subunit of cyclic nucleotide-gated channel tax-2/tax-4. In ASH sensory neurons, negatively regulates avoidance behavior to some bitter tastants, such as quinine, probably by phosphorylating rgs-2 and rgs-3 which are 2 regulator of G-protein signaling proteins. In AWB sensory neurons, involved in avoidance behavior to some repellent odors. In ASE left (ASEL) sensory neuron, involved in the sensing of environmental alkalinity downstream of receptor-type guanylate cyclase gcy-14. In sensory neurons, involved in the signaling pathway downstream of insulin, TGF-beta and receptor-type guanylate cyclase responsible for inducing quiescence after food intake. Might play a role in aversive olfactory learning in AWC neurons when an odor is associated with food deprivation, depending on the ins-1/age-1 signal from the AIA to the AWC neurons. Probably by regulating neuronal transmission downstream of lin-3 and receptor lin-23 and phospholipase plc-3 in ALA neurons, involved in the decrease in locomotion during the quiescent state that precedes each larval molt. In Caenorhabditis elegans, this protein is cGMP-dependent protein kinase egl-4.